Consider the following 558-residue polypeptide: DNA ligase B (558 aa).

Lysine 126 serves as the catalytic N6-AMP-lysine intermediate.

This sequence belongs to the NAD-dependent DNA ligase family. LigB subfamily.

The enzyme catalyses NAD(+) + (deoxyribonucleotide)n-3'-hydroxyl + 5'-phospho-(deoxyribonucleotide)m = (deoxyribonucleotide)n+m + AMP + beta-nicotinamide D-nucleotide.. Catalyzes the formation of phosphodiester linkages between 5'-phosphoryl and 3'-hydroxyl groups in double-stranded DNA using NAD as a coenzyme and as the energy source for the reaction. This Pseudomonas fluorescens (strain Pf0-1) protein is DNA ligase B.